An 834-amino-acid chain; its full sequence is Putative COX1/OXI3 intron 1 protein (834 aa).

A disordered region spans residues 162–188 (MKDTNNTKGNTKSEGSTERGNSGVDRG). Over residues 167–181 (NTKGNTKSEGSTERG) the composition is skewed to polar residues. One can recognise a Reverse transcriptase domain in the interval 296–577 (LSNELGTGKF…TPARFLGYNI (282 aa)).

It localises to the mitochondrion. This chain is Putative COX1/OXI3 intron 1 protein (AI1), found in Saccharomyces cerevisiae (strain ATCC 204508 / S288c) (Baker's yeast).